The following is a 297-amino-acid chain: Phosphoribosylaminoimidazole-succinocarboxamide synthase (297 aa).

This sequence belongs to the SAICAR synthetase family.

It catalyses the reaction 5-amino-1-(5-phospho-D-ribosyl)imidazole-4-carboxylate + L-aspartate + ATP = (2S)-2-[5-amino-1-(5-phospho-beta-D-ribosyl)imidazole-4-carboxamido]succinate + ADP + phosphate + 2 H(+). It functions in the pathway purine metabolism; IMP biosynthesis via de novo pathway; 5-amino-1-(5-phospho-D-ribosyl)imidazole-4-carboxamide from 5-amino-1-(5-phospho-D-ribosyl)imidazole-4-carboxylate: step 1/2. This is Phosphoribosylaminoimidazole-succinocarboxamide synthase from Mycobacterium sp. (strain KMS).